Reading from the N-terminus, the 360-residue chain is Phospho-N-acetylmuramoyl-pentapeptide-transferase (360 aa).

10 helical membrane-spanning segments follow: residues 21–41 (YITF…LWIG), 73–93 (TMGG…WADL), 98–118 (VWFV…DDYW), 132–152 (WKYF…YAVG), 168–188 (FMPQ…VGTS), 199–219 (GLAI…AWAT), 236–256 (AGEL…FLWY), 263–283 (VFMG…IAVL), 288–308 (LLLV…ILQV), and 338–358 (VIVC…VTLK).

This sequence belongs to the glycosyltransferase 4 family. MraY subfamily. Mg(2+) is required as a cofactor.

It is found in the cell inner membrane. It catalyses the reaction UDP-N-acetyl-alpha-D-muramoyl-L-alanyl-gamma-D-glutamyl-meso-2,6-diaminopimeloyl-D-alanyl-D-alanine + di-trans,octa-cis-undecaprenyl phosphate = di-trans,octa-cis-undecaprenyl diphospho-N-acetyl-alpha-D-muramoyl-L-alanyl-D-glutamyl-meso-2,6-diaminopimeloyl-D-alanyl-D-alanine + UMP. It functions in the pathway cell wall biogenesis; peptidoglycan biosynthesis. In terms of biological role, catalyzes the initial step of the lipid cycle reactions in the biosynthesis of the cell wall peptidoglycan: transfers peptidoglycan precursor phospho-MurNAc-pentapeptide from UDP-MurNAc-pentapeptide onto the lipid carrier undecaprenyl phosphate, yielding undecaprenyl-pyrophosphoryl-MurNAc-pentapeptide, known as lipid I. This is Phospho-N-acetylmuramoyl-pentapeptide-transferase from Actinobacillus pleuropneumoniae serotype 7 (strain AP76).